Consider the following 91-residue polypeptide: UPF0358 protein SERP0701 (91 aa).

The protein belongs to the UPF0358 family.

The protein is UPF0358 protein SERP0701 of Staphylococcus epidermidis (strain ATCC 35984 / DSM 28319 / BCRC 17069 / CCUG 31568 / BM 3577 / RP62A).